We begin with the raw amino-acid sequence, 110 residues long: uncharacterized protein (110 aa).

Helical transmembrane passes span 6 to 26 (VSLY…IYNV) and 38 to 58 (TSGP…IIGP).

The protein localises to the membrane. This is an uncharacterized protein from Saccharomyces cerevisiae (strain ATCC 204508 / S288c) (Baker's yeast).